Here is a 212-residue protein sequence, read N- to C-terminus: MTTPIIVTGTDTGVGKTVFSAALAGALEATYWKPVQAGLDEETDRLAVLRLSGLPETRLLAEAYRLTTPASPHLAAEIDGVAIDPEALVLPDTQGPLVVEGAGGLLVPLTRHVTYIDVFATWRAPVVLCARTTLGTINHTLLSIEALRARAIPLLGIAFIGDENAESERIIVELGRARRLGRLPHLAQLTTDALRAAFARNFNTADFLKETA.

13–18 (GVGKTV) lines the ATP pocket. Residue Thr-17 participates in Mg(2+) binding. Lys-33 is a catalytic residue. Residue Glu-100 coordinates Mg(2+). Residues 100 to 103 (EGAG) and 184 to 186 (PHL) contribute to the ATP site.

This sequence belongs to the dethiobiotin synthetase family. As to quaternary structure, homodimer. The cofactor is Mg(2+).

It is found in the cytoplasm. It catalyses the reaction (7R,8S)-7,8-diammoniononanoate + CO2 + ATP = (4R,5S)-dethiobiotin + ADP + phosphate + 3 H(+). Its pathway is cofactor biosynthesis; biotin biosynthesis; biotin from 7,8-diaminononanoate: step 1/2. Functionally, catalyzes a mechanistically unusual reaction, the ATP-dependent insertion of CO2 between the N7 and N8 nitrogen atoms of 7,8-diaminopelargonic acid (DAPA, also called 7,8-diammoniononanoate) to form a ureido ring. This is ATP-dependent dethiobiotin synthetase BioD from Rhodopseudomonas palustris (strain BisB5).